The following is a 266-amino-acid chain: Undecaprenyl-diphosphatase (266 aa).

8 consecutive transmembrane segments (helical) span residues 1–21 (MTLT…FLPI), 39–59 (QGLA…MIYF), 87–107 (WWVI…KAFI), 111–131 (ARSA…LWYA), 150–172 (LIVG…ITMT), 187–207 (FSFL…TLDL), 218–238 (ALIV…YLFL), and 244–264 (IGML…LLFV).

This sequence belongs to the UppP family.

The protein resides in the cell inner membrane. The enzyme catalyses di-trans,octa-cis-undecaprenyl diphosphate + H2O = di-trans,octa-cis-undecaprenyl phosphate + phosphate + H(+). Functionally, catalyzes the dephosphorylation of undecaprenyl diphosphate (UPP). Confers resistance to bacitracin. The polypeptide is Undecaprenyl-diphosphatase (Pseudoalteromonas atlantica (strain T6c / ATCC BAA-1087)).